We begin with the raw amino-acid sequence, 80 residues long: Protein CEBPZOS (80 aa).

The chain crosses the membrane as a helical span at residues 15–31; it reads GVLAAELVGVAGAYCLF.

Its subcellular location is the mitochondrion membrane. The polypeptide is Protein CEBPZOS (Mus musculus (Mouse)).